An 843-amino-acid chain; its full sequence is Leucine--tRNA ligase (843 aa).

The 'HIGH' region signature appears at 61 to 71 (PYPSGDLHMGH). The 'KMSKS' region signature appears at 606-610 (AMSKS). Lysine 609 is an ATP binding site.

It belongs to the class-I aminoacyl-tRNA synthetase family.

It localises to the cytoplasm. It catalyses the reaction tRNA(Leu) + L-leucine + ATP = L-leucyl-tRNA(Leu) + AMP + diphosphate. The sequence is that of Leucine--tRNA ligase from Arthrobacter sp. (strain FB24).